The primary structure comprises 1066 residues: Pumilio homolog 2 (1066 aa).

The tract at residues 1 to 260 (MNHDFQALAL…TVGLFDYNSQ (260 aa)) is interaction with SNAPIN. 4 positions are modified to phosphoserine: Ser67, Ser70, Ser82, and Ser102. Disordered regions lie at residues 106–203 (KLDS…GPLP), 368–408 (TANQ…AESL), and 490–551 (TGST…SASL). Positions 119–133 (RDAETDGPEKGDQKG) are enriched in basic and acidic residues. 3 positions are modified to phosphoserine: Ser136, Ser177, and Ser181. Thr183 carries the phosphothreonine modification. A compositionally biased stretch (low complexity) spans 368–383 (TANQQAASQAQPGQQQ). Residues 394–406 (ITPSQGQQGQQAE) show a composition bias toward polar residues. Residue Thr395 is modified to Phosphothreonine. The segment covering 503-514 (QPPQQQQQQQQP) has biased composition (low complexity). A compositionally biased stretch (polar residues) spans 515 to 525 (STNLQSNSFYG). Residues 526–540 (SSSLTNSSQSSSLFS) are compositionally biased toward low complexity. Ser587 and Ser592 each carry phosphoserine. The tract at residues 620 to 650 (SPIGMPLPSQTPGHSLTPPPSLSSHGSSSSL) is disordered. The span at 630-650 (TPGHSLTPPPSLSSHGSSSSL) shows a compositional bias: low complexity. Residue Arg674 is modified to Omega-N-methylarginine. A phosphoserine mark is found at Ser684 and Ser700. The region spanning 706 to 1048 (GRSRLLEDFR…HILAKLEKYY (343 aa)) is the PUM-HD domain. Pumilio repeat units follow at residues 726-761 (DLIG…IVFN), 762-797 (EILQ…ALAT), 798-835 (RIRG…EMVK), 836-871 (ELDG…FIID), 872-907 (AFKG…PILE), 908-943 (ELHQ…KIVS), 944-979 (EIRG…LLID), and 980-1022 (EVCC…IIMH). Residues 741 to 745 (SRFIQ) form an adenine-nucleotide binding in RNA target region. Positions 777–781 (NYVIQ) are uracil-nucleotide binding in RNA target. Residues 813–817 (CRVIQ) form an adenine-nucleotide binding in RNA target region. A non-specific-nucleotide binding in RNA target region spans residues 851 to 855 (NHVVQ). Positions 887 to 891 (CRVIQ) are adenine-nucleotide binding in RNA target. The tract at residues 923–927 (NYVIQ) is uracil-nucleotide binding in RNA target. The tract at residues 959–963 (SNVVE) is guanine-nucleotide binding in RNA target. Residues 1002–1006 (NYVVQ) form a uracil-nucleotide binding in RNA target region.

Homodimer; homodimerizes in vitro. Interacts with DAZ1, DAZL and NANOS1 via its pumilio repeats. Interacts with NANOS3. Interacts with SNAPIN. Recruits the CCR4-POP2-NOT deadenylase leading to translational inhibition and mRNA degradation. Interacts with DDX20. In case of viral infection, interacts with DHX58. In terms of tissue distribution, widely expressed. Expressed in embryonic stem cells, heart, kidney, lung, skin, intestine, spleen and thymus. Expressed at intermediate level in brain and liver. Weakly or not expressed in muscles and stomach. Expressed at various stages of myeloid and lymphoid cell development. In the testis expressed in the spermatogoni, spermatocytes, spermatids and Sertoli cells.

The protein localises to the cytoplasm. It localises to the cytoplasmic granule. Its subcellular location is the perinuclear region. Its function is as follows. Sequence-specific RNA-binding protein that acts as a post-transcriptional repressor by binding the 3'-UTR of mRNA targets. Binds to an RNA consensus sequence, the Pumilio Response Element (PRE), 5'-UGUANAUA-3', that is related to the Nanos Response Element (NRE). Mediates post-transcriptional repression of transcripts via different mechanisms: acts via direct recruitment of the CCR4-POP2-NOT deadenylase leading to translational inhibition and mRNA degradation. Also mediates deadenylation-independent repression by promoting accessibility of miRNAs. Acts as a post-transcriptional repressor of E2F3 mRNAs by binding to its 3'-UTR and facilitating miRNA regulation. Plays a role in cytoplasmic sensing of viral infection. Represses a program of genes necessary to maintain genomic stability such as key mitotic, DNA repair and DNA replication factors. Its ability to repress those target mRNAs is regulated by the lncRNA NORAD (non-coding RNA activated by DNA damage) which, due to its high abundance and multitude of PUMILIO binding sites, is able to sequester a significant fraction of PUM1 and PUM2 in the cytoplasm. May regulate DCUN1D3 mRNA levels. May support proliferation and self-renewal of stem cells. Binds specifically to miRNA MIR199A precursor, with PUM1, regulates miRNA MIR199A expression at a postranscriptional level. This Mus musculus (Mouse) protein is Pumilio homolog 2 (Pum2).